The primary structure comprises 338 residues: Anthranilate phosphoribosyltransferase (338 aa).

Residues Gly81, 84–85, Thr89, 91–94, 109–117, and Ala121 contribute to the 5-phospho-alpha-D-ribose 1-diphosphate site; these read GD, NIST, and KHGNRNLSS. Gly81 is a binding site for anthranilate. Ser93 contributes to the Mg(2+) binding site. Asn112 is a binding site for anthranilate. Arg167 serves as a coordination point for anthranilate. Asp226 and Glu227 together coordinate Mg(2+).

The protein belongs to the anthranilate phosphoribosyltransferase family. Homodimer. Mg(2+) is required as a cofactor.

It carries out the reaction N-(5-phospho-beta-D-ribosyl)anthranilate + diphosphate = 5-phospho-alpha-D-ribose 1-diphosphate + anthranilate. It functions in the pathway amino-acid biosynthesis; L-tryptophan biosynthesis; L-tryptophan from chorismate: step 2/5. In terms of biological role, catalyzes the transfer of the phosphoribosyl group of 5-phosphorylribose-1-pyrophosphate (PRPP) to anthranilate to yield N-(5'-phosphoribosyl)-anthranilate (PRA). In Cereibacter sphaeroides (strain ATCC 17029 / ATH 2.4.9) (Rhodobacter sphaeroides), this protein is Anthranilate phosphoribosyltransferase.